Reading from the N-terminus, the 318-residue chain is MRKQSARTAALILCILSYLLVGAAVFDALESEAERSRQRLLARKRGEFRRKYRFSADDYRELERLALQAEPHRAGRQWRFAGSFYFAITVITTIGYGHAAPGTDSGKVFCMFYALLGIPLTLVTFQSLGERLNALVRCLLLAAKRCLGLRRPHVSAENMVVAGLLLCAATLALGAAAFAHFEGWTFFHAYYYCFITLTTIGFGDFVALQRDEALQKKPPYVAFSFLYILLGLTVIGAFLNLVVLRFLASAEAPERAALRRASVFRRGAPESRVRIPYPFHPLETWARDNPAFSPPLSPEAVHDCHSSPDRLRARRKSI.

Over Met-1 to Thr-8 the chain is Cytoplasmic. Residues Ala-9–Leu-29 traverse the membrane as a helical segment. Residues Phe-80 to Pro-101 constitute an intramembrane region (pore-forming). Residues Val-108–Leu-128 form a helical membrane-spanning segment. The Cytoplasmic portion of the chain corresponds to Gly-129–Asn-158. The helical transmembrane segment at Met-159 to Ala-179 threads the bilayer. Residues Ala-189–Gln-209 constitute an intramembrane region (pore-forming). The chain crosses the membrane as a helical span at residues Phe-223–Val-243. Residues Leu-244–Ile-318 lie on the Cytoplasmic side of the membrane. Positions Leu-296 to Ile-318 are disordered. Basic and acidic residues predominate over residues Ala-300–Leu-311.

This sequence belongs to the two pore domain potassium channel (TC 1.A.1.8) family. Heterodimer. Phosphorylated. Brain-specific. Highly expressed in auditory nuclei, in Purkinje cells and in olfactory bulb mitral cells.

The protein resides in the membrane. Functionally, probable potassium channel subunit. No channel activity observed in heterologous systems. May need to associate with another protein to form a functional channel. This chain is Potassium channel subfamily K member 15 (Kcnk15), found in Rattus norvegicus (Rat).